Consider the following 202-residue polypeptide: Small ribosomal subunit protein uS4c (202 aa).

The S4 RNA-binding domain maps to 90–153; the sequence is MRLDNVIFRL…KSEAIISKNI (64 aa).

The protein belongs to the universal ribosomal protein uS4 family. In terms of assembly, part of the 30S ribosomal subunit. Contacts protein S5. The interaction surface between S4 and S5 is involved in control of translational fidelity.

It localises to the plastid. It is found in the chloroplast. In terms of biological role, one of the primary rRNA binding proteins, it binds directly to 16S rRNA where it nucleates assembly of the body of the 30S subunit. Functionally, with S5 and S12 plays an important role in translational accuracy. The sequence is that of Small ribosomal subunit protein uS4c (rps4) from Hypopterygium didictyon.